The chain runs to 524 residues: Beta-glucosidase 23 (524 aa).

A signal peptide spans 1 to 24 (MVLQKLPLIGLLLLLTIVASPANA). Residue glutamine 54 coordinates a beta-D-glucoside. Residue asparagine 60 is glycosylated (N-linked (GlcNAc...) asparagine). A beta-D-glucoside is bound by residues histidine 157 and 202 to 203 (NE). Glutamate 203 serves as the catalytic Proton donor. A disulfide bridge connects residues cysteine 222 and cysteine 230. Residues tyrosine 346 and glutamate 418 each coordinate a beta-D-glucoside. The active-site Nucleophile is glutamate 418. N-linked (GlcNAc...) asparagine glycosylation is present at asparagine 461. A beta-D-glucoside is bound by residues tryptophan 468, 475–476 (EW), and phenylalanine 484. Asparagine 494 carries N-linked (GlcNAc...) asparagine glycosylation. A Prevents secretion from ER motif is present at residues 521–524 (KDEL).

It belongs to the glycosyl hydrolase 1 family. In terms of assembly, homodimers. Binds to the deubiquitinating enzyme AMSH3. The inactive form interacts with PBP1/JAL30 to form the PYK10 complex, at least composed of PYK10/BGLU23, BGLU21, BGLU22, JAL22, JAL23, PBP1/JAL30, PBP2/JAL31, JAL32, JAL33, JAL34, JAL35, GLL22 and GLL23. In terms of processing, forms interchain disulfide bonds. In terms of tissue distribution, expressed exclusively in roots.

It localises to the endoplasmic reticulum lumen. The enzyme catalyses Hydrolysis of terminal, non-reducing beta-D-glucosyl residues with release of beta-D-glucose.. With respect to regulation, activated by tissue damage and upon binding to PBP1 or PBP2. Its function is as follows. Beta-D-glucosidase active on scopolin &gt; esculin &gt;&gt; 4-MU-glucoside &gt;&gt; DIMBOA-glucoside. No activity with pNP-glucoside, oNP-glucoside and sinigrin as substrates. May possess beta-D-fucosidase activity. Required for the beneficial interaction with the endophytic fungus P.indica. May participate in the control of root colonization by P.indica by repressing defense responses and modulating other responses required for a mutualistic interaction. The chain is Beta-glucosidase 23 from Arabidopsis thaliana (Mouse-ear cress).